The chain runs to 645 residues: Protein disulfide-isomerase A4 (645 aa).

The first 20 residues, 1-20 (MRPRKAFLLLLLLGLVQLLA), serve as a signal peptide directing secretion. 2 consecutive Thioredoxin domains span residues 21–169 (VAGA…EVSQ) and 158–301 (EEIV…EFLK). The interval 24-58 (AEGPDEDSSNRENAIEDEEEEEEEDDDEEEDDLEV) is disordered. The span at 38-58 (IEDEEEEEEEDDDEEEDDLEV) shows a compositional bias: acidic residues. A CXXC motif is present at residues 91-94 (CGHC). 2 cysteine pairs are disulfide-bonded: cysteine 91–cysteine 94 and cysteine 206–cysteine 209. An N6-acetyllysine modification is found at lysine 366. In terms of domain architecture, Thioredoxin 3 spans 505-636 (FKKGKLKPVI…LSKFIEEHAT (132 aa)). The CXXC signature appears at 555–558 (CGHC). Cysteine 555 and cysteine 558 are oxidised to a cystine. The short motif at 642–645 (KEEL) is the Prevents secretion from ER element.

Belongs to the protein disulfide isomerase family. Part of a large chaperone multiprotein complex comprising DNAJB11, HSP90B1, HSPA5, HYOU, PDIA2, PDIA4, PDIA6, PPIB, SDF2L1, UGGT1 and very small amounts of ERP29, but not, or at very low levels, CALR nor CANX. Component of a complex containing at least CRELD2, MANF, MATN3 and PDIA4. In terms of assembly, (Microbial infection) Interacts with Human astrovirus-1 and Human astrovirus-8 spike protein VP25; this interaction seems to facilitate the uncoating during virus entry into the cell. Does not interact with Human astrovirus-2 spike protein VP25.

It is found in the endoplasmic reticulum lumen. The protein localises to the melanosome. The catalysed reaction is Catalyzes the rearrangement of -S-S- bonds in proteins.. This Homo sapiens (Human) protein is Protein disulfide-isomerase A4 (PDIA4).